A 270-amino-acid polypeptide reads, in one-letter code: Interleukin-1 alpha (270 aa).

Positions 1 to 112 are excised as a propeptide; the sequence is MAKVPDLFED…EVEEEIMKPR (112 aa). An N6-acetyllysine modification is found at lysine 82. Residues 82–86 form a nuclear localization signal (NLS) region; that stretch reads KKRRL. Phosphoserine is present on serine 87. Asparagine 139 is a glycosylation site (N-linked (GlcNAc...) asparagine).

The protein belongs to the IL-1 family. As to quaternary structure, monomer. Interacts with TMED10; the interaction mediates the translocation from the cytoplasm into the ERGIC (endoplasmic reticulum-Golgi intermediate compartment) and thereby secretion. Interacts with IL1R1. Interacts with S100A13; this interaction is the first step in the export of IL1A, followed by direct translocation of this complex across the plasma membrane. Post-translationally, acetylated within its nuclear localization sequence, which impacts subcellular localization. Proteolytic processed by CAPN1 in a calcium-dependent manner. Cleavage from 31 kDa precursor to 18 kDa biologically active molecules. In terms of processing, phosphorylated. Phosphorylation greatly enhances susceptibility to digestion and promotes the conversion of pre-IL1A alpha to the biologically active IL1A.

Its subcellular location is the nucleus. The protein resides in the cytoplasm. It localises to the secreted. Cytokine constitutively present intracellularly in nearly all resting non-hematopoietic cells that plays an important role in inflammation and bridges the innate and adaptive immune systems. After binding to its receptor IL1R1 together with its accessory protein IL1RAP, forms the high affinity interleukin-1 receptor complex. Signaling involves the recruitment of adapter molecules such as MYD88, IRAK1 or IRAK4. In turn, mediates the activation of NF-kappa-B and the three MAPK pathways p38, p42/p44 and JNK pathways. Within the cell, acts as an alarmin and cell death results in its liberation in the extracellular space after disruption of the cell membrane to induce inflammation and alert the host to injury or damage. In addition to its role as a danger signal, which occurs when the cytokine is passively released by cell necrosis, directly senses DNA damage and acts as signal for genotoxic stress without loss of cell integrity. This is Interleukin-1 alpha (IL1A) from Felis catus (Cat).